A 410-amino-acid polypeptide reads, in one-letter code: Voltage-dependent chloride channel 2, chloroplastic (410 aa).

At 1-110 (MYQSMNLSFS…RHVSSSPSSR (110 aa)) the chain is on the lumenal, thylakoid side. Residues 111 to 131 (VILSLIPPVFFFTTVAILIAG) traverse the membrane as a helical segment. Over 132–147 (YNSAVDLDWLPDFFPV) the chain is Stromal. The chain crosses the membrane as a helical span at residues 148–168 (LRASPLPYQLTAPALALLLVF). Over 169–315 (RTEASYSRFE…PLSYTRLTSR (147 aa)) the chain is Lumenal, thylakoid. 2 helical membrane passes run 316 to 336 (FLVLWHLTLPVILWDDCHWNV) and 337 to 357 (VPATFISAASLFCIEEVGVLI). Topologically, residues 358–410 (EEPFSMLALDELCAMVLSNSDEAVESKEVIRNRIIAKKRILEIKHSSNGWHKS) are lumenal, thylakoid.

This sequence belongs to the anion channel-forming bestrophin (TC 1.A.46) family. Voltage-dependent chloride channel subfamily. Mostly expressed in flowers and, to a lower extent, in leaves, stems and roots.

It is found in the plastid. It localises to the chloroplast thylakoid membrane. The enzyme catalyses chloride(in) = chloride(out). In terms of biological role, voltage-dependent chloride (Cl) channel probably contributing to proton motive force (PMF) partitioning across the thylakoid membrane by anion influx into the lumen. Influences thylakoid ultrastructure, including lumen size and organization. In Arabidopsis thaliana (Mouse-ear cress), this protein is Voltage-dependent chloride channel 2, chloroplastic.